The following is a 212-amino-acid chain: Peptide methionine sulfoxide reductase MsrA (212 aa).

C52 is a catalytic residue.

It belongs to the MsrA Met sulfoxide reductase family.

It catalyses the reaction L-methionyl-[protein] + [thioredoxin]-disulfide + H2O = L-methionyl-(S)-S-oxide-[protein] + [thioredoxin]-dithiol. The catalysed reaction is [thioredoxin]-disulfide + L-methionine + H2O = L-methionine (S)-S-oxide + [thioredoxin]-dithiol. In terms of biological role, has an important function as a repair enzyme for proteins that have been inactivated by oxidation. Catalyzes the reversible oxidation-reduction of methionine sulfoxide in proteins to methionine. The polypeptide is Peptide methionine sulfoxide reductase MsrA (Escherichia coli (strain ATCC 8739 / DSM 1576 / NBRC 3972 / NCIMB 8545 / WDCM 00012 / Crooks)).